A 395-amino-acid polypeptide reads, in one-letter code: Acetate kinase (395 aa).

Asn7 provides a ligand contact to Mg(2+). Residue Lys14 participates in ATP binding. Arg90 lines the substrate pocket. Asp147 (proton donor/acceptor) is an active-site residue. ATP-binding positions include 207 to 211 (HLGNG), 282 to 284 (DFR), and 330 to 334 (GLGEN). Glu383 lines the Mg(2+) pocket.

The protein belongs to the acetokinase family. Homodimer. The cofactor is Mg(2+). Mn(2+) is required as a cofactor.

It localises to the cytoplasm. The enzyme catalyses acetate + ATP = acetyl phosphate + ADP. The protein operates within metabolic intermediate biosynthesis; acetyl-CoA biosynthesis; acetyl-CoA from acetate: step 1/2. Functionally, catalyzes the formation of acetyl phosphate from acetate and ATP. Can also catalyze the reverse reaction. This chain is Acetate kinase, found in Lachnoclostridium phytofermentans (strain ATCC 700394 / DSM 18823 / ISDg) (Clostridium phytofermentans).